The primary structure comprises 355 residues: Tetraspanin-10 (355 aa).

Residues 1-33 are disordered; it reads MEEGERSPLLSQETAGQKPLSVHRPPTSGCLGP. At 1–78 the chain is on the cytoplasmic side; sequence MEEGERSPLL…LSPGSSCVKY (78 aa). Residues 79–99 form a helical membrane-spanning segment; the sequence is LIFLSNFPFSLLGLLALAIGL. Residues 100 to 120 are Extracellular-facing; that stretch reads WGLAVKGSLGSDLGGPLPTDP. The helical transmembrane segment at 121-141 threads the bilayer; sequence MLGLALGGLVVSAASLAGCLG. Over 142–154 the chain is Cytoplasmic; the sequence is ALCENTCLLRGFS. The helical transmembrane segment at 155-175 threads the bilayer; the sequence is GGILAFLVLEAVAGALVVALW. Topologically, residues 176 to 355 are extracellular; the sequence is GPLQDSLEHT…APPAAKPARG (180 aa). Intrachain disulfides connect Cys-212-Cys-279, Cys-213-Cys-243, Cys-229-Cys-237, and Cys-244-Cys-258. N-linked (GlcNAc...) asparagine glycosylation is present at Asn-228. The disordered stretch occupies residues 327 to 355; it reads YGPGAHGEDRAGPQSPSPGAPPAAKPARG. Residues 341–355 show a composition bias toward pro residues; it reads SPSPGAPPAAKPARG.

It belongs to the tetraspanin (TM4SF) family. As to quaternary structure, interacts with ADAM10. As to expression, expressed in the eye, including iris, ciliary body, retinal pigment epithelium, but not lens (protein level).

It localises to the cell membrane. Functionally, part of TspanC8 subgroup, composed of 6 members that interact with the transmembrane metalloprotease ADAM10. This interaction is required for ADAM10 exit from the endoplasmic reticulum and for enzymatic maturation and trafficking to the cell surface as well as substrate specificity. Different TspanC8/ADAM10 complexes have distinct substrates. The chain is Tetraspanin-10 from Homo sapiens (Human).